Consider the following 342-residue polypeptide: Holliday junction branch migration complex subunit RuvB (342 aa).

The large ATPase domain (RuvB-L) stretch occupies residues 1–185; it reads MTVKPLRDVT…FPIQERLEYY (185 aa). Residues Leu24, Arg25, Gly66, Lys69, Thr70, Ser71, 132–134, Arg175, Tyr185, and Arg222 contribute to the ATP site; that span reads EDY. Mg(2+) is bound at residue Thr70. The segment at 186 to 256 is small ATPAse domain (RuvB-S); it reads GPAELKEIAV…VVDRTLRRLE (71 aa). The segment at 259 to 342 is head domain (RuvB-H); that stretch reads ARGLDAMDRR…RPGGKQGSLV (84 aa). DNA is bound by residues Arg314 and Arg319.

It belongs to the RuvB family. In terms of assembly, homohexamer. Forms an RuvA(8)-RuvB(12)-Holliday junction (HJ) complex. HJ DNA is sandwiched between 2 RuvA tetramers; dsDNA enters through RuvA and exits via RuvB. An RuvB hexamer assembles on each DNA strand where it exits the tetramer. Each RuvB hexamer is contacted by two RuvA subunits (via domain III) on 2 adjacent RuvB subunits; this complex drives branch migration. In the full resolvosome a probable DNA-RuvA(4)-RuvB(12)-RuvC(2) complex forms which resolves the HJ.

Its subcellular location is the cytoplasm. It carries out the reaction ATP + H2O = ADP + phosphate + H(+). Its function is as follows. The RuvA-RuvB-RuvC complex processes Holliday junction (HJ) DNA during genetic recombination and DNA repair, while the RuvA-RuvB complex plays an important role in the rescue of blocked DNA replication forks via replication fork reversal (RFR). RuvA specifically binds to HJ cruciform DNA, conferring on it an open structure. The RuvB hexamer acts as an ATP-dependent pump, pulling dsDNA into and through the RuvAB complex. RuvB forms 2 homohexamers on either side of HJ DNA bound by 1 or 2 RuvA tetramers; 4 subunits per hexamer contact DNA at a time. Coordinated motions by a converter formed by DNA-disengaged RuvB subunits stimulates ATP hydrolysis and nucleotide exchange. Immobilization of the converter enables RuvB to convert the ATP-contained energy into a lever motion, pulling 2 nucleotides of DNA out of the RuvA tetramer per ATP hydrolyzed, thus driving DNA branch migration. The RuvB motors rotate together with the DNA substrate, which together with the progressing nucleotide cycle form the mechanistic basis for DNA recombination by continuous HJ branch migration. Branch migration allows RuvC to scan DNA until it finds its consensus sequence, where it cleaves and resolves cruciform DNA. The polypeptide is Holliday junction branch migration complex subunit RuvB (Anaeromyxobacter sp. (strain K)).